Consider the following 550-residue polypeptide: Carboxypeptidase Y homolog A (550 aa).

The signal sequence occupies residues 1–18; it reads MKSLVLGLLVGSAIASGP. The propeptide occupies 19–131; the sequence is LQHVLHAPPD…KLSQYDLRIK (113 aa). A disordered region spans residues 20-39; it reads QHVLHAPPDPEPKPEPEPQV. 5 disulfides stabilise this stretch: Cys185–Cys424, Cys319–Cys333, Cys343–Cys366, Cys350–Cys359, and Cys388–Cys394. Residues Asn203 and Asn216 are each glycosylated (N-linked (GlcNAc...) asparagine). Ser272 is a catalytic residue. N-linked (GlcNAc...) asparagine glycosylation occurs at Asn289. N-linked (GlcNAc...) asparagine glycosylation is present at Asn387. The active site involves Asp463. N-linked (GlcNAc...) asparagine glycosylation is found at Asn493 and Asn514. The active site involves His525.

The protein belongs to the peptidase S10 family.

It is found in the vacuole. It carries out the reaction Release of a C-terminal amino acid with broad specificity.. Functionally, vacuolar carboxypeptidase involved in degradation of small peptides. Digests preferentially peptides containing an aliphatic or hydrophobic residue in P1' position, as well as methionine, leucine or phenylalanine in P1 position of ester substrate. In Paracoccidioides brasiliensis (strain Pb18), this protein is Carboxypeptidase Y homolog A (CPYA).